Reading from the N-terminus, the 168-residue chain is Crossover junction endodeoxyribonuclease RuvC (168 aa).

Residues Asp9, Glu69, and Asp141 contribute to the active site. Asp9, Glu69, and Asp141 together coordinate Mg(2+).

Belongs to the RuvC family. In terms of assembly, homodimer which binds Holliday junction (HJ) DNA. The HJ becomes 2-fold symmetrical on binding to RuvC with unstacked arms; it has a different conformation from HJ DNA in complex with RuvA. In the full resolvosome a probable DNA-RuvA(4)-RuvB(12)-RuvC(2) complex forms which resolves the HJ. The cofactor is Mg(2+).

It is found in the cytoplasm. It carries out the reaction Endonucleolytic cleavage at a junction such as a reciprocal single-stranded crossover between two homologous DNA duplexes (Holliday junction).. Its function is as follows. The RuvA-RuvB-RuvC complex processes Holliday junction (HJ) DNA during genetic recombination and DNA repair. Endonuclease that resolves HJ intermediates. Cleaves cruciform DNA by making single-stranded nicks across the HJ at symmetrical positions within the homologous arms, yielding a 5'-phosphate and a 3'-hydroxyl group; requires a central core of homology in the junction. The consensus cleavage sequence is 5'-(A/T)TT(C/G)-3'. Cleavage occurs on the 3'-side of the TT dinucleotide at the point of strand exchange. HJ branch migration catalyzed by RuvA-RuvB allows RuvC to scan DNA until it finds its consensus sequence, where it cleaves and resolves the cruciform DNA. The polypeptide is Crossover junction endodeoxyribonuclease RuvC (Bdellovibrio bacteriovorus (strain ATCC 15356 / DSM 50701 / NCIMB 9529 / HD100)).